The primary structure comprises 286 residues: Probable alpha-ketoglutarate-dependent hypophosphite dioxygenase (286 aa).

This sequence belongs to the PhyH family.

Required for hypophosphite oxidation. The sequence is that of Probable alpha-ketoglutarate-dependent hypophosphite dioxygenase (htxA) from Stutzerimonas stutzeri (Pseudomonas stutzeri).